A 364-amino-acid chain; its full sequence is Coproporphyrin III ferrochelatase (364 aa).

The Fe-coproporphyrin III site is built by arginine 29 and tyrosine 118. The Fe(2+) site is built by histidine 169 and glutamate 250.

Belongs to the ferrochelatase family.

The protein resides in the cytoplasm. The catalysed reaction is Fe-coproporphyrin III + 2 H(+) = coproporphyrin III + Fe(2+). Its pathway is porphyrin-containing compound metabolism; protoheme biosynthesis. Its function is as follows. Involved in coproporphyrin-dependent heme b biosynthesis. Catalyzes the insertion of ferrous iron into coproporphyrin III to form Fe-coproporphyrin III. This Streptococcus pneumoniae (strain Taiwan19F-14) protein is Coproporphyrin III ferrochelatase.